The chain runs to 545 residues: Protein disulfide isomerase-like 1-3 (545 aa).

Residues 1–16 (MWPRAPATPPPPPWPS) show a composition bias toward pro residues. The tract at residues 1–24 (MWPRAPATPPPPPWPSKPSAASRS) is disordered. A Thioredoxin 1 domain is found at 55–189 (ASSTAFAAAF…IVAYLKRQAG (135 aa)). Asn87 is a glycosylation site (N-linked (GlcNAc...) asparagine). Active-site nucleophile residues include Cys107 and Cys110. Cys107 and Cys110 are oxidised to a cystine. Residue Asn349 is glycosylated (N-linked (GlcNAc...) asparagine). A Thioredoxin 2 domain is found at 403 to 545 (FTEGTLAPHV…TTTESVKDEL (143 aa)). Residues Cys453 and Cys456 each act as nucleophile in the active site. Cys453 and Cys456 are disulfide-bonded. The Prevents secretion from ER signature appears at 542-545 (KDEL).

The protein belongs to the protein disulfide isomerase family.

It is found in the endoplasmic reticulum lumen. It catalyses the reaction Catalyzes the rearrangement of -S-S- bonds in proteins.. Functionally, acts as a protein-folding catalyst that interacts with nascent polypeptides to catalyze the formation, isomerization, and reduction or oxidation of disulfide bonds. May play a role in storage protein biogenesis. This chain is Protein disulfide isomerase-like 1-3 (PDIL1-3), found in Oryza sativa subsp. japonica (Rice).